Consider the following 364-residue polypeptide: Glycine oxidase (364 aa).

FAD-binding positions include 12–13 (VI), 32–33 (ER), 40–41 (AS), 45–47 (GGI), and V173. R302 is a binding site for substrate. 327-333 (HYRNGLV) lines the FAD pocket.

Belongs to the DAO family. ThiO subfamily. As to quaternary structure, monomer. Requires FAD as cofactor.

It catalyses the reaction glycine + O2 + H2O = glyoxylate + H2O2 + NH4(+). It carries out the reaction sarcosine + O2 + H2O = methylamine + glyoxylate + H2O2. It participates in cofactor biosynthesis; thiamine diphosphate biosynthesis. In terms of biological role, catalyzes the oxidation of glycine, leading to glyoxyl imine and hydrogen peroxide as primary products; glyoxyl imine is used for the biosynthesis of the thiazole ring of thiamine. Otherwise, glyoxyl imine is spontaneously hydrolyzed in water to produce glyoxylate and ammonia. Can also use sarcosine (N-methylglycine) as substrate. This is Glycine oxidase from Pseudomonas aeruginosa (strain ATCC 15692 / DSM 22644 / CIP 104116 / JCM 14847 / LMG 12228 / 1C / PRS 101 / PAO1).